Consider the following 321-residue polypeptide: Homoserine O-succinyltransferase (321 aa).

Cysteine 142 acts as the Acyl-thioester intermediate in catalysis. Substrate is bound by residues lysine 163 and serine 192. The active-site Proton acceptor is the histidine 235. Glutamate 237 is an active-site residue. Arginine 249 contacts substrate.

Belongs to the MetA family.

The protein localises to the cytoplasm. The catalysed reaction is L-homoserine + succinyl-CoA = O-succinyl-L-homoserine + CoA. It participates in amino-acid biosynthesis; L-methionine biosynthesis via de novo pathway; O-succinyl-L-homoserine from L-homoserine: step 1/1. In terms of biological role, transfers a succinyl group from succinyl-CoA to L-homoserine, forming succinyl-L-homoserine. In Shewanella loihica (strain ATCC BAA-1088 / PV-4), this protein is Homoserine O-succinyltransferase.